We begin with the raw amino-acid sequence, 123 residues long: Thioredoxin H-type 1 (123 aa).

A2 carries the N-acetylalanine modification. The region spanning 2 to 119 (AATAEVIPAG…IEAKLLKHSQ (118 aa)) is the Thioredoxin domain. Cysteines 45 and 48 form a disulfide.

The protein belongs to the thioredoxin family. Plant H-type subfamily.

The protein resides in the cytoplasm. Its function is as follows. Participates in various redox reactions through the reversible oxidation of the active center dithiol to a disulfide. The H form is known to activate a number of cytosolic enzymes. This chain is Thioredoxin H-type 1 (THL-1), found in Brassica napus (Rape).